Here is a 208-residue protein sequence, read N- to C-terminus: Glutathione S-transferase 1 (208 aa).

The region spanning 1 to 80 (MDFYYLPGSA…YLVEKYGKTD (80 aa)) is the GST N-terminal domain. Glutathione is bound by residues serine 9, 50-52 (HTI), and 64-66 (ESR). A GST C-terminal domain is found at 86 to 207 (CPKKRAVINQ…AGCLEFKKYF (122 aa)).

The protein belongs to the GST superfamily. Theta family. As to quaternary structure, homodimer.

It carries out the reaction RX + glutathione = an S-substituted glutathione + a halide anion + H(+). Conjugation of reduced glutathione to a wide number of exogenous and endogenous hydrophobic electrophiles. The polypeptide is Glutathione S-transferase 1 (Gst1) (Musca domestica (House fly)).